The chain runs to 602 residues: Cytokine-like nuclear factor N-PAC (602 aa).

Serine 8 and serine 10 each carry phosphoserine. The PWWP domain occupies 22–81 (PKDLIWAKMKGFTPWPGMIVDPPLDLLSQQRRANTKCVFFFGSRNFAWIEENNIKPFEGP). The disordered stretch occupies residues 162–262 (GSPDEGDGLD…ASSTPTGRRR (101 aa)). Composition is skewed to polar residues over residues 176 to 188 (ADSS…SPAV), 204 to 217 (AATS…SAKS), and 224 to 233 (SAQQSPSGPS). Serine 224, serine 228, and serine 243 each carry phosphoserine. Residues 309-602 (RDIVPSEQTF…SSAVFVRSRF (294 aa)) form a dehydrogenase domain region. Residues 319–333 (GFLG…IVKD), threonine 411, and arginine 554 each bind NAD(+).

The protein belongs to the HIBADH-related family. NP60 subfamily. As to quaternary structure, binds to mononucleosomes. Interacts with male-specific lethal (MSL) histone acetyltransferase complex at least composed of mof, msl-1, msl-2 and msl-3.

Its subcellular location is the chromosome. Functionally, nucleosome-destabilizing factor that is recruited to genes during transcriptional activation and colocalizes with a subset of trimethylated 'Lys-36' histone H3 (H3K36me3)-enriched regions. Binds DNA (in vitro). Facilitates Pol II transcription through nucleosomes. Facilitates male-specific lethal (MSL) histone acetyltransferase complex targeting to active genes on the X chromosome. Stimulates the acetylation of 'Lys-56' of nucleosomal histone H3 (H3K56ac) by nej. May have oxidoreductase activity. The protein is Cytokine-like nuclear factor N-PAC of Drosophila melanogaster (Fruit fly).